Reading from the N-terminus, the 603-residue chain is Elongation factor 4 (603 aa).

In terms of domain architecture, tr-type G spans 7–189; sequence VRIRNFCIIA…AVVERIPPPP (183 aa). GTP-binding positions include 19-24 and 136-139; these read DHGKST and NKID.

Belongs to the TRAFAC class translation factor GTPase superfamily. Classic translation factor GTPase family. LepA subfamily.

The protein localises to the cell inner membrane. The catalysed reaction is GTP + H2O = GDP + phosphate + H(+). Required for accurate and efficient protein synthesis under certain stress conditions. May act as a fidelity factor of the translation reaction, by catalyzing a one-codon backward translocation of tRNAs on improperly translocated ribosomes. Back-translocation proceeds from a post-translocation (POST) complex to a pre-translocation (PRE) complex, thus giving elongation factor G a second chance to translocate the tRNAs correctly. Binds to ribosomes in a GTP-dependent manner. The sequence is that of Elongation factor 4 from Trichormus variabilis (strain ATCC 29413 / PCC 7937) (Anabaena variabilis).